Here is a 70-residue protein sequence, read N- to C-terminus: UPF0337 protein BT9727_3385 (70 aa).

It belongs to the UPF0337 (CsbD) family.

The sequence is that of UPF0337 protein BT9727_3385 from Bacillus thuringiensis subsp. konkukian (strain 97-27).